The following is a 94-amino-acid chain: Co-chaperonin GroES (94 aa).

Belongs to the GroES chaperonin family. Heptamer of 7 subunits arranged in a ring. Interacts with the chaperonin GroEL.

The protein resides in the cytoplasm. Its function is as follows. Together with the chaperonin GroEL, plays an essential role in assisting protein folding. The GroEL-GroES system forms a nano-cage that allows encapsulation of the non-native substrate proteins and provides a physical environment optimized to promote and accelerate protein folding. GroES binds to the apical surface of the GroEL ring, thereby capping the opening of the GroEL channel. The polypeptide is Co-chaperonin GroES (Clostridium novyi (strain NT)).